Reading from the N-terminus, the 488-residue chain is Glycogen synthase (488 aa).

Lys17 provides a ligand contact to ADP-alpha-D-glucose.

It belongs to the glycosyltransferase 1 family. Bacterial/plant glycogen synthase subfamily.

It catalyses the reaction [(1-&gt;4)-alpha-D-glucosyl](n) + ADP-alpha-D-glucose = [(1-&gt;4)-alpha-D-glucosyl](n+1) + ADP + H(+). It functions in the pathway glycan biosynthesis; glycogen biosynthesis. Synthesizes alpha-1,4-glucan chains using ADP-glucose. The protein is Glycogen synthase of Nitratidesulfovibrio vulgaris (strain DSM 19637 / Miyazaki F) (Desulfovibrio vulgaris).